We begin with the raw amino-acid sequence, 186 residues long: Nuclear transcription factor Y subunit C-5 (186 aa).

Positions 166–186 (QMPGAWTEEDATGANGGNGGN) are disordered.

The protein belongs to the NFYC/HAP5 subunit family. As to quaternary structure, heterotrimeric transcription factor composed of three components, NF-YA, NF-YB and NF-YC. NF-YB and NF-YC must interact and dimerize for NF-YA association and DNA binding. In terms of tissue distribution, expressed in inflorescences and flowers.

The protein resides in the nucleus. Functionally, stimulates the transcription of various genes by recognizing and binding to a CCAAT motif in promoters. This is Nuclear transcription factor Y subunit C-5 (NFYC5) from Arabidopsis thaliana (Mouse-ear cress).